Consider the following 28-residue polypeptide: MNKVTDLRSAIELLKTIPGQLIETNXDV.

As to quaternary structure, homopentamer.

It catalyses the reaction 3,4-dihydroxybenzoate + H(+) = catechol + CO2. Its activity is regulated as follows. Inhibited by oxygen. Completely inhibited by HgCl(2). Partially inhibited by ZnSO(4), 2,3,4-trihydroxybeonzoate and 3,4,5-trihydroxybeonzoate. Unaffected by KCl, MnCl(2) or EDTA. Not stimulated by thiamine phosphate, pyridoxal 5'-phosphate or biotin. Not inhibited by hydroxylamine, NaBH(4) or avidin. Reversibly catalyzes the decarboxylation of 3,4-dihydroxybenzoate to catechol. Inactive toward 4-hydroxybenzoate and other benzoate derivatives. This chain is 3,4-dihydroxybenzoate decarboxylase, found in Sedimentibacter hydroxybenzoicus (Clostridium hydroxybenzoicum).